The sequence spans 278 residues: 1-acyl-sn-glycerol-3-phosphate acyltransferase beta (278 aa).

A signal peptide spans 1–23 (MDPWPWLTAALLLLLLLVQLSRT). At 24-29 (ARFYAK) the chain is on the lumenal side. A helical transmembrane segment spans residues 30–50 (VGLYCVLCLSFSAAASIVCLL). Over 51–121 (RHGGRTVDNM…PKRCVQIAKR (71 aa)) the chain is Cytoplasmic. The HXXXXD motif signature appears at 98–103 (HQSILD). Residues 122–142 (ELMFTGPVGLIMYLGGVYFIN) form a helical membrane-spanning segment. Residues 143-278 (RQQARTAMSV…IKEPGVLPAQ (136 aa)) lie on the Lumenal side of the membrane. Positions 172–175 (EGTR) match the EGTR motif motif.

This sequence belongs to the 1-acyl-sn-glycerol-3-phosphate acyltransferase family. In terms of tissue distribution, expressed at high levels in the liver, at intermediate levels in the kidney, gut, heart and skeletal muscles. Undetectable in brain and spleen.

The protein resides in the endoplasmic reticulum membrane. It catalyses the reaction a 1-acyl-sn-glycero-3-phosphate + an acyl-CoA = a 1,2-diacyl-sn-glycero-3-phosphate + CoA. It carries out the reaction 1-(9Z-octadecenoyl)-sn-glycero-3-phosphate + (9Z)-octadecenoyl-CoA = 1,2-di-(9Z-octadecenoyl)-sn-glycero-3-phosphate + CoA. The enzyme catalyses 1-(9Z-octadecenoyl)-sn-glycero-3-phosphate + hexadecanoyl-CoA = 1-(9Z)-octadecenoyl-2-hexadecanoyl-sn-glycero-3-phosphate + CoA. The catalysed reaction is heptadecanoyl-CoA + 1-(9Z-octadecenoyl)-sn-glycero-3-phosphate = 1-(9Z)-octadecenoyl-2-heptadecanoyl-sn-glycero-3-phosphate + CoA. It catalyses the reaction 1-(9Z-octadecenoyl)-sn-glycero-3-phosphate + (9Z,12Z)-octadecadienoyl-CoA = 1-(9Z)-octadecenoyl-2-(9Z,12Z)-octadecadienoyl-sn-glycero-3-phosphate + CoA. It carries out the reaction 1-(9Z-octadecenoyl)-sn-glycero-3-phosphate + tetradecanoyl-CoA = 1-(9Z)-octadecenoyl-2-tetradecanoyl-sn-glycero-3-phosphate + CoA. The enzyme catalyses pentadecanoyl-CoA + 1-(9Z-octadecenoyl)-sn-glycero-3-phosphate = 1-(9Z)-octadecenoyl-2-pentadecanoyl-sn-glycero-3-phosphate + CoA. The catalysed reaction is 1-hexadecanoyl-sn-glycero-3-phosphate + (9Z)-octadecenoyl-CoA = 1-hexadecanoyl-2-(9Z-octadecenoyl)-sn-glycero-3-phosphate + CoA. It catalyses the reaction 1-tetradecanoyl-sn-glycerol 3-phosphate + (9Z)-octadecenoyl-CoA = 1-tetradecanoyl-2-(9Z)-octadecenoyl-sn-glycero-3-phosphate + CoA. It carries out the reaction 1-(9Z,12Z,15Z)-octadecatrienoyl-sn-glycero-3-phosphate + (9Z)-octadecenoyl-CoA = 1-(9Z,12Z,15Z)-octadecatrienoyl-2-(9Z)-octadecenoyl-sn-glycero-3-phosphate + CoA. The enzyme catalyses 1-(6Z,9Z,12Z-octadecatrienoyl)-sn-glycero-3-phosphate + (9Z)-octadecenoyl-CoA = (6Z,9Z,12Z)-octadecatrienoyl-2-(9Z)-octadecenoyl-sn-glycero-3-phosphate + CoA. The catalysed reaction is 1-eicosanoyl-sn-glycero-3-phosphate + (9Z)-octadecenoyl-CoA = 1-eicosanoyl-2-(9Z)-octadecenoyl-sn-glycero-3-phosphate + CoA. It catalyses the reaction 1-hexadecanoyl-sn-glycero-3-phosphate + octadecanoyl-CoA = 1-hexadecanoyl-2-octadecanoyl-sn-glycero-3-phosphate + CoA. It carries out the reaction 1-hexadecanoyl-sn-glycero-3-phosphate + (5Z,8Z,11Z,14Z)-eicosatetraenoyl-CoA = 1-hexadecanoyl-2-(5Z,8Z,11Z,14Z-eicosatetraenoyl)-sn-glycero-3-phosphate + CoA. The enzyme catalyses 1-hexadecanoyl-sn-glycero-3-phosphate + hexadecanoyl-CoA = 1,2-dihexadecanoyl-sn-glycero-3-phosphate + CoA. The catalysed reaction is 1-hexadecanoyl-sn-glycero-3-phosphate + tetradecanoyl-CoA = 1-hexadecanoyl-2-tetradecanoyl-sn-glycero-3-phosphate + CoA. It catalyses the reaction (11Z)-octadecenoyl-CoA + 1-(9Z-octadecenoyl)-sn-glycero-3-phosphate = 1-(9Z)-octadecenoyl-2-(11Z)-octadecenoyl-sn-glycero-3-phosphate + CoA. Its pathway is phospholipid metabolism; CDP-diacylglycerol biosynthesis; CDP-diacylglycerol from sn-glycerol 3-phosphate: step 2/3. Its function is as follows. Converts 1-acyl-sn-glycerol-3-phosphate (lysophosphatidic acid or LPA) into 1,2-diacyl-sn-glycerol-3-phosphate (phosphatidic acid or PA) by incorporating an acyl moiety at the sn-2 position of the glycerol backbone. The sequence is that of 1-acyl-sn-glycerol-3-phosphate acyltransferase beta (Agpat2) from Mus musculus (Mouse).